The primary structure comprises 758 residues: MAQTTLKPIVLSILLINTPLLAQAHETEQSVDLETVSVVGKSRPRATSGLLHTSTASDKIISGDTLRQKAVNLGDALDGVPGIHASQYGGGASAPVIRGQTGRRIKVLNHHGETGDMADFSPDHAIMVDTALSQQVEILRGPVTLLYSSGNVAGLVDVADGKIPEKMPENGVSGELGLRLSSGNLEKLTSGGINIGLGKNFVLHTEGLYRKSGDYAVPRYRNLKRLPDSHADSQTGSIGLSWVGEKGFIGVAYSDRRDQYGLPAHSHEYDDCHADIIWQKSLINKRYLQLYPHLLTEEDIDYDNPGLSCGFHDDDNAHAHTHSGRPWIDLRNKRYELRAEWKQPFPGFEALRVHLNRNDYRHDEKAGDAVENFFNNQTQNARIELRHQPIGRLKGSWGVQYLQQKSSALSAISEAVKQPMLLDNKVQHYSFFGVEQANWDNFTLEGGVRVEKQKASIQYDKALIDRENYYNHPLPDLGAHRQTARSFALSGNWYFTPQHKLSLTASHQERLPSTQELYAHGKHVATNTFEVGNKHLNKERSNNIELALGYEGDRWQYNLALYRNRFGNYIYAQTLNDGRGPKSIEDDSEMKLVRYNQSGADFYGAEGEIYFKPTPRYRIGVSGDYVRGRLKNLPSLPGREDAYGNRPFIAQDDQNAPRVPAARLGFHLKASLTDRIDANLDYYRVFAQNKLARYETRTPGHHMLNLGANYRRNTRYGEWNWYVKADNLLNQSVYAHSSFLSDTPQMGRSFTGGVNVKF.

Residues 1-24 form the signal peptide; the sequence is MAQTTLKPIVLSILLINTPLLAQA. A TBDR plug domain is found at 50–161; it reads LLHTSTASDK…VAGLVDVADG (112 aa). Residues 171 to 758 form the TBDR beta-barrel domain; the sequence is GVSGELGLRL…SFTGGVNVKF (588 aa). Positions 741 to 758 match the TonB C-terminal box motif; the sequence is SDTPQMGRSFTGGVNVKF.

The protein belongs to the TonB-dependent receptor family.

The protein resides in the cell outer membrane. Its function is as follows. Probable receptor, TonB-dependent. This is Probable TonB-dependent receptor NMB0964 from Neisseria meningitidis serogroup B (strain ATCC BAA-335 / MC58).